The primary structure comprises 206 residues: Small ribosomal subunit protein uS4 (206 aa).

The 62-residue stretch at 96-157 folds into the S4 RNA-binding domain; it reads SRLDNVVYRM…KAKKQVRIQE (62 aa).

It belongs to the universal ribosomal protein uS4 family. Part of the 30S ribosomal subunit. Contacts protein S5. The interaction surface between S4 and S5 is involved in control of translational fidelity.

One of the primary rRNA binding proteins, it binds directly to 16S rRNA where it nucleates assembly of the body of the 30S subunit. Functionally, with S5 and S12 plays an important role in translational accuracy. The chain is Small ribosomal subunit protein uS4 from Neisseria gonorrhoeae (strain ATCC 700825 / FA 1090).